Reading from the N-terminus, the 513-residue chain is MTDKNPIVVMKGITIEFPGVKALDGVDLTLYPGEVHALMGENGAGKSTMIKALTGVYKINAGSIMVDGKPQQFNGTLDAQNAGIATVYQEVNLCTNLSVGENVMLGHEKRGPFGIDWKKTHEAAKKYLAQMGLESIDPHTPLSSISIAMQQLVAIARAMVINAKVLILDEPTSSLDANEVRDLFAIMRKVRDSGVAILFVSHFLDQIYEITDRLTILRNGQFIKEVMTKDTPRDELIGMMIGKSAAELSQIGAKKARREITPGEKPIVDVKGLGKKGTINPVDVDIYKGEVVGFAGLLGSGRTELGRLLYGADKPDSGTYTLNGKKVNISDPYTALKNKIAYSTENRRDEGIIGDLTVRQNILIALQATRGMFKPIPKKEADAIVDKYMKELNVRPADPDRPVKNLSGGNQQKVLIGRWLATHPELLILDEPTRGIDIGAKAEIQQVVLDLASQGMGVVFISSELEEVVRLSDDIEVLKDRHKIAEIENDDTVSQATIVETIANTNVNTGKEA.

ABC transporter domains follow at residues 8–244 (VVMK…IGKS) and 262–505 (PGEK…IANT). ATP is bound at residue 40-47 (GENGAGKS).

This sequence belongs to the ABC transporter superfamily. In terms of assembly, the complex is composed of an ATP-binding protein (FruK), two transmembrane proteins (FruF and FruG) and a solute-binding protein (FruE).

The protein resides in the cell membrane. It carries out the reaction D-fructose(out) + ATP + H2O = D-fructose(in) + ADP + phosphate + H(+). Part of the high-affinity ABC transporter complex FruEKFG involved in fructose uptake. Can also transport ribose and xylose, with lower affinity. Probably responsible for energy coupling to the transport system. This is Fructose import ATP-binding protein FruK from Bifidobacterium longum (strain NCC 2705).